We begin with the raw amino-acid sequence, 175 residues long: ATP-dependent protease subunit HslV (175 aa).

Residue Thr2 is part of the active site. Na(+)-binding residues include Ala156, Cys159, and Thr162.

This sequence belongs to the peptidase T1B family. HslV subfamily. A double ring-shaped homohexamer of HslV is capped on each side by a ring-shaped HslU homohexamer. The assembly of the HslU/HslV complex is dependent on binding of ATP.

The protein resides in the cytoplasm. The enzyme catalyses ATP-dependent cleavage of peptide bonds with broad specificity.. With respect to regulation, allosterically activated by HslU binding. In terms of biological role, protease subunit of a proteasome-like degradation complex believed to be a general protein degrading machinery. The chain is ATP-dependent protease subunit HslV from Rhizobium etli (strain CIAT 652).